A 61-amino-acid chain; its full sequence is Large ribosomal subunit protein bL32 (61 aa).

Over residues 1–16 (MAVPRRKTSPSRRGMR) the composition is skewed to basic residues. The segment at 1–61 (MAVPRRKTSP…RQVLKAKSDS (61 aa)) is disordered. Basic and acidic residues predominate over residues 27-44 (YAEDKDSGELRRPHHLDL).

It belongs to the bacterial ribosomal protein bL32 family.

The sequence is that of Large ribosomal subunit protein bL32 from Nitrobacter winogradskyi (strain ATCC 25391 / DSM 10237 / CIP 104748 / NCIMB 11846 / Nb-255).